Here is a 99-residue protein sequence, read N- to C-terminus: Mitochondrial import receptor subunit TOM9-2 (99 aa).

Topologically, residues 2 to 51 (AAKRIGAGKSGGGDPNILARISNSEIVSQGRRAAGDAVEVSKKLLRSTGK) are cytoplasmic. Residues 52 to 69 (AAWIAGTTFLILVVPLII) traverse the membrane as a helical segment. Topologically, residues 70–99 (EMDREAQINEIELQQASLLGAPPSPMQRGL) are mitochondrial intermembrane.

The protein belongs to the Tom22 family. In terms of assembly, forms part of the preprotein translocase complex of the outer mitochondrial membrane (TOM complex) which consists of at least 6 different proteins (TOM5, TOM6, TOM7, TOM20, TOM22/TOM9 and TOM40). In terms of tissue distribution, expressed in young cotyledons, roots, flowers and leaves.

The protein localises to the mitochondrion outer membrane. Functionally, central component of the receptor complex responsible for the recognition and translocation of cytosolically synthesized mitochondrial preproteins. Together with TOM20 functions as the transit peptide receptor at the surface of the mitochondrion outer membrane and facilitates the movement of preproteins into the translocation pore. The polypeptide is Mitochondrial import receptor subunit TOM9-2 (TOM9-2) (Arabidopsis thaliana (Mouse-ear cress)).